The primary structure comprises 350 residues: B1 bradykinin receptor (350 aa).

Residues 1-41 lie on the Extracellular side of the membrane; that stretch reads MASRAPLELLPLNRSQLSPPNATTCDDAPEAWDLLHRVLPS. 2 N-linked (GlcNAc...) asparagine glycosylation sites follow: Asn-13 and Asn-21. A helical transmembrane segment spans residues 42 to 62; that stretch reads VIIIICVCGLLGNLLVLAVLL. Residues 63-72 are Cytoplasmic-facing; it reads RPRRRLNVAE. The helical transmembrane segment at 73–93 threads the bilayer; that stretch reads MYLANLAASDLVFVLGLPFWA. Residues 94–110 are Extracellular-facing; the sequence is ANISNQFRWPFGGLLCR. The N-linked (GlcNAc...) asparagine glycan is linked to Asn-95. Residues Cys-109 and Cys-186 are joined by a disulfide bond. The helical transmembrane segment at 111-131 threads the bilayer; that stretch reads LVNGVIKANLFISIFLVVAIS. The Cytoplasmic portion of the chain corresponds to 132 to 150; that stretch reads RDRYRALVHPMATRRRRQA. Residues 151-171 form a helical membrane-spanning segment; the sequence is RATCVLIWVAGSLLSVPTFLF. Residues 172 to 204 lie on the Extracellular side of the membrane; that stretch reads RSIEAVPELNNDSACVLLHPPGAWHVARMVELN. Asn-182 carries N-linked (GlcNAc...) asparagine glycosylation. Residues 205–225 traverse the membrane as a helical segment; sequence VLGFLLPLAAIVFFNCHILAS. The Cytoplasmic portion of the chain corresponds to 226–248; sequence LRGRPEVRGARCGGPPDGRTTAL. The chain crosses the membrane as a helical span at residues 249–269; that stretch reads ILTFVAAFLVCWTPYHFFAFL. Over 270–292 the chain is Extracellular; sequence EFLTQVQVVRGCFWENFKDLGLQ. The chain crosses the membrane as a helical span at residues 293-313; it reads YASFFAFINSCLNPVIYVFVG. At 314–350 the chain is on the cytoplasmic side; it reads RLFRTRVWDLFKQCAPRRPPAVSWSHRKRVLQLFWQN. Cys-327 carries S-palmitoyl cysteine lipidation.

Belongs to the G-protein coupled receptor 1 family. Bradykinin receptor subfamily. BDKRB1 sub-subfamily.

The protein localises to the cell membrane. In terms of biological role, this is a receptor for bradykinin. Could be a factor in chronic pain and inflammation. This is B1 bradykinin receptor (BDKRB1) from Canis lupus familiaris (Dog).